The sequence spans 151 residues: Large ribosomal subunit protein uL30 (151 aa).

This sequence belongs to the universal ribosomal protein uL30 family. In terms of assembly, part of the 50S ribosomal subunit.

This Methanothrix thermoacetophila (strain DSM 6194 / JCM 14653 / NBRC 101360 / PT) (Methanosaeta thermophila) protein is Large ribosomal subunit protein uL30.